We begin with the raw amino-acid sequence, 366 residues long: tRNA/tmRNA (uracil-C(5))-methyltransferase (366 aa).

Residues Q189, Y217, N222, E238, and D298 each contribute to the S-adenosyl-L-methionine site. The active-site Nucleophile is C323. E357 (proton acceptor) is an active-site residue.

Belongs to the class I-like SAM-binding methyltransferase superfamily. RNA M5U methyltransferase family. TrmA subfamily.

The catalysed reaction is uridine(54) in tRNA + S-adenosyl-L-methionine = 5-methyluridine(54) in tRNA + S-adenosyl-L-homocysteine + H(+). It carries out the reaction uridine(341) in tmRNA + S-adenosyl-L-methionine = 5-methyluridine(341) in tmRNA + S-adenosyl-L-homocysteine + H(+). Functionally, dual-specificity methyltransferase that catalyzes the formation of 5-methyluridine at position 54 (m5U54) in all tRNAs, and that of position 341 (m5U341) in tmRNA (transfer-mRNA). This is tRNA/tmRNA (uracil-C(5))-methyltransferase from Shewanella oneidensis (strain ATCC 700550 / JCM 31522 / CIP 106686 / LMG 19005 / NCIMB 14063 / MR-1).